Consider the following 214-residue polypeptide: Probable transaldolase (214 aa).

The Schiff-base intermediate with substrate role is filled by K83.

This sequence belongs to the transaldolase family. Type 3B subfamily.

It localises to the cytoplasm. The catalysed reaction is D-sedoheptulose 7-phosphate + D-glyceraldehyde 3-phosphate = D-erythrose 4-phosphate + beta-D-fructose 6-phosphate. The protein operates within carbohydrate degradation; pentose phosphate pathway; D-glyceraldehyde 3-phosphate and beta-D-fructose 6-phosphate from D-ribose 5-phosphate and D-xylulose 5-phosphate (non-oxidative stage): step 2/3. Functionally, transaldolase is important for the balance of metabolites in the pentose-phosphate pathway. This is Probable transaldolase from Alkaliphilus metalliredigens (strain QYMF).